The primary structure comprises 537 residues: Arginine--tRNA ligase (537 aa).

Positions 113–123 (ANPTGRIHLGH) match the 'HIGH' region motif.

It belongs to the class-I aminoacyl-tRNA synthetase family. As to quaternary structure, monomer.

The protein resides in the cytoplasm. The enzyme catalyses tRNA(Arg) + L-arginine + ATP = L-arginyl-tRNA(Arg) + AMP + diphosphate. This chain is Arginine--tRNA ligase (argS), found in Mycoplasma genitalium (strain ATCC 33530 / DSM 19775 / NCTC 10195 / G37) (Mycoplasmoides genitalium).